The sequence spans 467 residues: MMIKIFDSVKREKVEFIPLKKGEVSLYVCGPTVYDDSHLGHARSAIAFDLLRRLMEFEGYRVRFVKNFTDIDDKIIKKSLESGEEIGAITERYITSYLEDMQKLGIKRPDIEPRATESLDLMWEMIQSLLQKGIAYQTPRGDIYLDVKQDPSYGKLSGRGEDLEQVSRIESSEEKRDPRDFALWKSYKGQSDVGYESPFGRGRPGWHIECSAMIEKHLAKEGDYAIDIHAGGSDLLFPHHENEACQTRCATGRELAKYWMHNGFVTINGEKMSKSLGNSFFVKDALRVYDGEVLRFYLLSTHYRMGLNFSEEDLLASKKRLDRLYRLKKRVGEGEVGAPSEKFLERLLEGLRDDMNISRALSAMDEMLTLSNEELDSSPKERALQATIRGNLEVLERLLGIGAKSPILYFQMGVSPEEKEKIEELIKERAEAKKAKDFARADEIRKSLSDQGIALLDTPSGTLWERA.

Position 29 (cysteine 29) interacts with Zn(2+). The 'HIGH' region signature appears at 31-41 (PTVYDDSHLGH). The tract at residues 155–174 (KLSGRGEDLEQVSRIESSEE) is disordered. Positions 158 to 174 (GRGEDLEQVSRIESSEE) are enriched in basic and acidic residues. Zn(2+) contacts are provided by cysteine 210, histidine 239, and glutamate 243. Residues 271 to 275 (KMSKS) carry the 'KMSKS' region motif. Lysine 274 contacts ATP.

This sequence belongs to the class-I aminoacyl-tRNA synthetase family. As to quaternary structure, monomer. Zn(2+) is required as a cofactor.

The protein localises to the cytoplasm. It carries out the reaction tRNA(Cys) + L-cysteine + ATP = L-cysteinyl-tRNA(Cys) + AMP + diphosphate. The polypeptide is Cysteine--tRNA ligase (Wolinella succinogenes (strain ATCC 29543 / DSM 1740 / CCUG 13145 / JCM 31913 / LMG 7466 / NCTC 11488 / FDC 602W) (Vibrio succinogenes)).